Consider the following 426-residue polypeptide: Histidine--tRNA ligase (426 aa).

The protein belongs to the class-II aminoacyl-tRNA synthetase family. As to quaternary structure, homodimer.

It is found in the cytoplasm. It catalyses the reaction tRNA(His) + L-histidine + ATP = L-histidyl-tRNA(His) + AMP + diphosphate + H(+). The chain is Histidine--tRNA ligase from Streptococcus pyogenes serotype M5 (strain Manfredo).